Reading from the N-terminus, the 265-residue chain is Small ribosomal subunit protein uS2 (265 aa).

It belongs to the universal ribosomal protein uS2 family.

The protein is Small ribosomal subunit protein uS2 of Aliarcobacter butzleri (strain RM4018) (Arcobacter butzleri).